Here is a 204-residue protein sequence, read N- to C-terminus: MGSREEELRFILHDLGVGPYFLGTFDKHFPGFISKDRMSCAIVNTAGRETGGVHWLAMAWHPASQTFYMFDPFGFSDQKLKQIYNFEYQGLLKRSALTSTADRCLTLIQSTQSVQGPNSAACGLFCCMFLHAFVRWPLRAMDNNPTMNLIHGVPNNMLESPSSQNVFLRNQQNLYRFLRRHSPHFVKHAAQIEADTAFDKMLTN.

Residues histidine 54, aspartate 71, and cysteine 122 contribute to the active site.

Belongs to the peptidase C5 family. In terms of assembly, interacts with protease cofactor pVI-C; this interaction is necessary for protease activation.

The protein localises to the virion. Its subcellular location is the host nucleus. The catalysed reaction is Cleaves proteins of the adenovirus and its host cell at two consensus sites: -Yaa-Xaa-Gly-Gly-|-Xaa- and -Yaa-Xaa-Gly-Xaa-|-Gly- (in which Yaa is Met, Ile or Leu, and Xaa is any amino acid).. Its activity is regulated as follows. Requires DNA and protease cofactor for maximal activation. Inside nascent virions, becomes partially activated by binding to the viral DNA, allowing it to cleave the cofactor that binds to the protease and fully activates it. Actin, like the viral protease cofactor, seems to act as a cofactor in the cleavage of cytokeratin 18 and of actin itself. Functionally, cleaves viral precursor proteins (pTP, pIIIa, pVI, pVII, pVIII, and pX) inside newly assembled particles giving rise to mature virions. Protease complexed to its cofactor slides along the viral DNA to specifically locate and cleave the viral precursors. Mature virions have a weakened organization compared to the unmature virions, thereby facilitating subsequent uncoating. Without maturation, the particle lacks infectivity and is unable to uncoat. Late in adenovirus infection, in the cytoplasm, may participate in the cytoskeleton destruction. Cleaves host cell cytoskeletal keratins K7 and K18. This chain is Protease, found in Bos taurus (Bovine).